The primary structure comprises 658 residues: Pentatricopeptide repeat-containing protein 7, mitochondrial (658 aa).

A mitochondrion-targeting transit peptide spans 1–29 (MRNCVSPLLFAWTKHLRLREFKIPFPNRL). 2 PPR repeats span residues 130–164 (VKKR…TPIW) and 220–254 (LYVE…SESL).

The protein resides in the mitochondrion. Functionally, mitochondrial RNA-binding protein required for the stability of the atp6 mRNA. This chain is Pentatricopeptide repeat-containing protein 7, mitochondrial (ppr7), found in Schizosaccharomyces pombe (strain 972 / ATCC 24843) (Fission yeast).